Reading from the N-terminus, the 97-residue chain is Putative pterin-4-alpha-carbinolamine dehydratase (97 aa).

The protein belongs to the pterin-4-alpha-carbinolamine dehydratase family.

It catalyses the reaction (4aS,6R)-4a-hydroxy-L-erythro-5,6,7,8-tetrahydrobiopterin = (6R)-L-erythro-6,7-dihydrobiopterin + H2O. The protein is Putative pterin-4-alpha-carbinolamine dehydratase of Phenylobacterium zucineum (strain HLK1).